The following is a 191-amino-acid chain: Large ribosomal subunit protein uL5 (191 aa).

The protein belongs to the universal ribosomal protein uL5 family. Part of the 50S ribosomal subunit; part of the 5S rRNA/L5/L18/L25 subcomplex. Contacts the 5S rRNA and the P site tRNA. Forms a bridge to the 30S subunit in the 70S ribosome.

Functionally, this is one of the proteins that bind and probably mediate the attachment of the 5S RNA into the large ribosomal subunit, where it forms part of the central protuberance. In the 70S ribosome it contacts protein S13 of the 30S subunit (bridge B1b), connecting the 2 subunits; this bridge is implicated in subunit movement. Contacts the P site tRNA; the 5S rRNA and some of its associated proteins might help stabilize positioning of ribosome-bound tRNAs. The chain is Large ribosomal subunit protein uL5 from Micrococcus luteus (strain ATCC 4698 / DSM 20030 / JCM 1464 / CCM 169 / CCUG 5858 / IAM 1056 / NBRC 3333 / NCIMB 9278 / NCTC 2665 / VKM Ac-2230) (Micrococcus lysodeikticus).